The primary structure comprises 407 residues: Histone-lysine N-methyltransferase SUV39H2 (407 aa).

In terms of domain architecture, Chromo spans Y43–K101. Positions T185 to G243 constitute a Pre-SET domain. The Zn(2+) site is built by C187, C189, C192, C197, C198, C225, C229, C231, and C235. The SET domain occupies Y246 to Q369. Residues R257 to W259, Y300, and N326 to H327 contribute to the S-adenosyl-L-methionine site. C329, C395, C397, and C402 together coordinate Zn(2+). One can recognise a Post-SET domain in the interval I391–N407.

This sequence belongs to the class V-like SAM-binding methyltransferase superfamily. Histone-lysine methyltransferase family. Suvar3-9 subfamily.

Its subcellular location is the nucleus. The protein resides in the chromosome. It localises to the centromere. It carries out the reaction L-lysyl(9)-[histone H3] + 3 S-adenosyl-L-methionine = N(6),N(6),N(6)-trimethyl-L-lysyl(9)-[histone H3] + 3 S-adenosyl-L-homocysteine + 3 H(+). Histone methyltransferase that specifically trimethylates 'Lys-9' of histone H3 using monomethylated H3 'Lys-9' as substrate. H3 'Lys-9' trimethylation represents a specific tag for epigenetic transcriptional repression by recruiting HP1 (CBX1, CBX3 and/or CBX5) proteins to methylated histones. Mainly functions in heterochromatin regions, thereby playing a central role in the establishment of constitutive heterochromatin at pericentric and telomere regions. H3 'Lys-9' trimethylation is also required to direct DNA methylation at pericentric repeats. SUV39H1 is targeted to histone H3 via its interaction with RB1 and is involved in many processes. The chain is Histone-lysine N-methyltransferase SUV39H2 (SUV39H2) from Gallus gallus (Chicken).